The primary structure comprises 506 residues: Anaerobic nitric oxide reductase transcription regulator NorR (506 aa).

The residue at position 57 (aspartate 57) is a 4-aspartylphosphate. Residues 187–416 (MIGLSPAMTQ…LEHAIHRAVV (230 aa)) enclose the Sigma-54 factor interaction domain. ATP is bound by residues 215-222 (GETGTGKE) and 278-287 (ADNGTLFLDE). The segment at residues 481–500 (WAASARALETDVANLHRLAK) is a DNA-binding region (H-T-H motif).

It functions in the pathway nitrogen metabolism; nitric oxide reduction. Functionally, required for the expression of anaerobic nitric oxide (NO) reductase, acts as a transcriptional activator for at least the norVW operon. Activation also requires sigma-54. The protein is Anaerobic nitric oxide reductase transcription regulator NorR of Salmonella gallinarum (strain 287/91 / NCTC 13346).